A 1579-amino-acid chain; its full sequence is DNA-directed RNA polymerase II subunit RPB1 (1579 aa).

Residues Cys68, Cys71, Cys78, His81, Cys108, Cys111, Cys149, and Cys171 each contribute to the Zn(2+) site. Mg(2+)-binding residues include Asp485, Asp487, and Asp489. Residues 642–654 form a bridging helix region; it reads PQEFFFHAMAGRE. Lys1080 is covalently cross-linked (Glycyl lysine isopeptide (Lys-Gly) (interchain with G-Cter in ubiquitin)). Positions 1382-1565 are enriched in low complexity; it reads SPTYSPTSPS…NSPQYSPRSP (184 aa). The disordered stretch occupies residues 1382–1579; sequence SPTYSPTSPS…DQNDDKDKKQ (198 aa). 16 tandem repeats follow at residues 1385 to 1391, 1392 to 1398, 1399 to 1405, 1406 to 1412, 1413 to 1419, 1420 to 1426, 1427 to 1433, 1434 to 1440, 1441 to 1447, 1448 to 1454, 1455 to 1461, 1462 to 1468, 1469 to 1475, 1476 to 1482, 1483 to 1489, and 1490 to 1496. The tract at residues 1385–1566 is C-terminal domain (CTD); 26 X 7 AA approximate tandem repeats of Y-S-P-T-S-P-[S-A-Q]; that stretch reads YSPTSPSYSP…SPQYSPRSPL (182 aa). The stretch at 1497-1503 is one 17; approximate repeat; the sequence is YSPTSPL. 7 consecutive repeat copies span residues 1504–1510, 1511–1517, 1518–1524, 1525–1531, 1532–1538, 1539–1545, and 1546–1552. The 25; approximate repeat unit spans residues 1553 to 1559; it reads YSPNSPQ. The 26; approximate repeat unit spans residues 1560–1566; the sequence is YSPRSPL.

Belongs to the RNA polymerase beta' chain family. Component of the RNA polymerase II (Pol II) complex consisting of 12 subunits. In terms of processing, the tandem 7 residues repeats in the C-terminal domain (CTD) can be highly phosphorylated. The phosphorylation activates Pol II. Phosphorylation occurs mainly at residues 'Ser-2' and 'Ser-5' of the heptapeptide repeat. The phosphorylation state is believed to result from the balanced action of site-specific CTD kinases and phosphatase, and a 'CTD code' that specifies the position of Pol II within the transcription cycle has been proposed. Post-translationally, following transcription stress, the elongating form of RNA polymerase II (RNA pol IIo) is polyubiquitinated via 'Lys-63'-linkages on Lys-1080 at DNA damage sites without leading to degradation: ubiquitination promotes RNA pol IIo backtracking to allow access by the transcription-coupled nucleotide excision repair (TC-NER) machinery. Subsequent DEF1-dependent polyubiquitination by the elongin complex via 'Lys-48'-linkages may lead to proteasome-mediated degradation; presumably at stalled RNA pol II where TC-NER has failed, to halt global transcription and enable 'last resort' DNA repair pathways.

It is found in the nucleus. It catalyses the reaction RNA(n) + a ribonucleoside 5'-triphosphate = RNA(n+1) + diphosphate. In terms of biological role, DNA-dependent RNA polymerase catalyzes the transcription of DNA into RNA using the four ribonucleoside triphosphates as substrates. Largest and catalytic component of RNA polymerase II which synthesizes mRNA precursors and many functional non-coding RNAs. Forms the polymerase active center together with the second largest subunit. Pol II is the central component of the basal RNA polymerase II transcription machinery. It is composed of mobile elements that move relative to each other. RPB1 is part of the core element with the central large cleft, the clamp element that moves to open and close the cleft and the jaws that are thought to grab the incoming DNA template. At the start of transcription, a single-stranded DNA template strand of the promoter is positioned within the central active site cleft of Pol II. A bridging helix emanates from RPB1 and crosses the cleft near the catalytic site and is thought to promote translocation of Pol II by acting as a ratchet that moves the RNA-DNA hybrid through the active site by switching from straight to bent conformations at each step of nucleotide addition. During transcription elongation, Pol II moves on the template as the transcript elongates. Elongation is influenced by the phosphorylation status of the C-terminal domain (CTD) of Pol II largest subunit (RPB1), which serves as a platform for assembly of factors that regulate transcription initiation, elongation, termination and mRNA processing. This chain is DNA-directed RNA polymerase II subunit RPB1 (RPB1), found in Meyerozyma guilliermondii (strain ATCC 6260 / CBS 566 / DSM 6381 / JCM 1539 / NBRC 10279 / NRRL Y-324) (Yeast).